A 125-amino-acid polypeptide reads, in one-letter code: MSSKRFTKDHEWIEVDGDVGTVGISDYAQHALGDVVFVEVPEPGRVVAKGAEAAVVESVKAASEVYSPVSGTVTAGNQAIVDQPGLVNEAAEGAAWFFKLTLSNPGEVADLMDQAAYDAYLKTLE.

The region spanning 19–101 is the Lipoyl-binding domain; that stretch reads VGTVGISDYA…EGAAWFFKLT (83 aa). Residue Lys-60 is modified to N6-lipoyllysine.

This sequence belongs to the GcvH family. The glycine cleavage system is composed of four proteins: P, T, L and H. It depends on (R)-lipoate as a cofactor.

Functionally, the glycine cleavage system catalyzes the degradation of glycine. The H protein shuttles the methylamine group of glycine from the P protein to the T protein. This chain is Glycine cleavage system H protein, found in Paramagnetospirillum magneticum (strain ATCC 700264 / AMB-1) (Magnetospirillum magneticum).